Here is a 393-residue protein sequence, read N- to C-terminus: S-adenosylmethionine synthase 1 (393 aa).

Glutamate 9 is a binding site for Mg(2+). ATP is bound at residue histidine 15. Glutamate 43 provides a ligand contact to K(+). L-methionine contacts are provided by glutamate 56 and glutamine 99. ATP-binding positions include 167–169, 235–238, aspartate 246, 252–253, alanine 269, lysine 273, and lysine 277; these read DGK, SGRF, and RK. Aspartate 246 provides a ligand contact to L-methionine. Lysine 277 serves as a coordination point for L-methionine.

It belongs to the AdoMet synthase family. As to quaternary structure, homotetramer. The cofactor is Mn(2+). Requires Mg(2+) as cofactor. Co(2+) is required as a cofactor. K(+) serves as cofactor. In terms of tissue distribution, mostly expressed in stems.

The protein localises to the cytoplasm. The catalysed reaction is L-methionine + ATP + H2O = S-adenosyl-L-methionine + phosphate + diphosphate. The protein operates within amino-acid biosynthesis; S-adenosyl-L-methionine biosynthesis; S-adenosyl-L-methionine from L-methionine: step 1/1. Catalyzes the formation of S-adenosylmethionine from methionine and ATP. The reaction comprises two steps that are both catalyzed by the same enzyme: formation of S-adenosylmethionine (AdoMet) and triphosphate, and subsequent hydrolysis of the triphosphate. This chain is S-adenosylmethionine synthase 1 (SAM1), found in Solanum lycopersicum (Tomato).